Consider the following 467-residue polypeptide: Cysteine--tRNA ligase (467 aa).

Cys30 provides a ligand contact to Zn(2+). A 'HIGH' region motif is present at residues 32 to 42 (PTVYNYIHIGN). Zn(2+) contacts are provided by Cys210, His235, and Glu239. Positions 267 to 271 (KMSKS) match the 'KMSKS' region motif. Lys270 contributes to the ATP binding site. Phosphoserine is present on Ser271.

Belongs to the class-I aminoacyl-tRNA synthetase family. Monomer. It depends on Zn(2+) as a cofactor.

The protein localises to the cytoplasm. The catalysed reaction is tRNA(Cys) + L-cysteine + ATP = L-cysteinyl-tRNA(Cys) + AMP + diphosphate. This is Cysteine--tRNA ligase from Geobacillus thermodenitrificans (strain NG80-2).